Here is a 73-residue protein sequence, read N- to C-terminus: MATQSKYQSKQFDALSGDLIAILEKHKAPVDLSLMALGNMVTNILLENVQTEAQRLALAEAFSNALKNSLKIK.

This sequence belongs to the UPF0352 family.

This is UPF0352 protein APJL_0577 from Actinobacillus pleuropneumoniae serotype 3 (strain JL03).